Consider the following 243-residue polypeptide: Protein canopy homolog 3 (243 aa).

The signal sequence occupies residues 1-15 (MWFLFLLLPLWAGCA). Positions 27 to 236 (SKCEVCKYVA…KEEKKQMDQP (210 aa)) constitute a Saposin B-type domain. 3 disulfide bridges follow: C29–C188, C32–C176, and C86–C148. Residues 136–160 (ETSAEVADMKKQCDVMMENYEEVIE) are a coiled coil. Residues 186–243 (QSCLSEQGDSRKGDTGPSTGTKKQKKQGEKKNKSKKQNSGSKEEKKQMDQPMAAKEEL) are disordered. The span at 226-243 (SKEEKKQMDQPMAAKEEL) shows a compositional bias: basic and acidic residues.

Belongs to the canopy family.

It is found in the endoplasmic reticulum. Toll-like receptor (TLR)-specific co-chaperone for HSP90B1. Required for proper TLR folding and hence controls TLR exit from the endoplasmic reticulum. Consequently, required for immune responses. The sequence is that of Protein canopy homolog 3 (cnpy3) from Xenopus laevis (African clawed frog).